The chain runs to 365 residues: Red-sensitive opsin (365 aa).

The Extracellular portion of the chain corresponds to 1–51; the sequence is MASQLNEAIFAARRRNDDDDTTRSSVFTYTNSNNTRGPFEGPNYHIAPRWV. N-linked (GlcNAc...) asparagine glycosylation is present at Asn33. Residues 52-76 traverse the membrane as a helical segment; that stretch reads YNLTSIWMIFVVFASVFTNGLVIVA. Residues 77 to 88 are Cytoplasmic-facing; sequence TLKFKKLRHPLN. The helical transmembrane segment at 89-113 threads the bilayer; it reads WILVNMAIADLGETVIASTISVFNQ. At 114-128 the chain is on the extracellular side; the sequence is IFGYFILGHPMCVLE. An intrachain disulfide couples Cys125 to Cys202. The helical transmembrane segment at 129–148 threads the bilayer; sequence GFTVSTCGITALWSLTVIAW. Residues 149-167 lie on the Cytoplasmic side of the membrane; the sequence is ERWFVVCKPFGNIKFDEKL. The chain crosses the membrane as a helical span at residues 168 to 191; the sequence is AATGIIFSWVWSAGWCAPPMFGWS. Residues 192–217 are Extracellular-facing; it reads RFWPHGLKTSCGPDVFSGSSDPGVQS. Residues 218-245 form a helical membrane-spanning segment; that stretch reads YMLVLMITCCIIPLAIIILCYLHVWWTI. Residues 246–267 are Cytoplasmic-facing; that stretch reads RQVAQQQKESESTQKAEREVSR. Residues 268–291 form a helical membrane-spanning segment; the sequence is MVVVMIVAYIFCWGPYTFFACFAA. Residues 292–299 lie on the Extracellular side of the membrane; it reads FSPGYSFH. The helical transmembrane segment at 300-324 threads the bilayer; it reads PLAAALPAYFAKSATIYNPIIYVFM. Position 311 is an N6-(retinylidene)lysine (Lys311). Topologically, residues 325–365 are cytoplasmic; it reads NRQFRNCIYQMFGKKVDDGSEVSSTSRTEVSSVSNSSVSPA. Residues 342–365 form a disordered region; sequence DGSEVSSTSRTEVSSVSNSSVSPA. The segment covering 345–365 has biased composition (low complexity); sequence EVSSTSRTEVSSVSNSSVSPA.

This sequence belongs to the G-protein coupled receptor 1 family. Opsin subfamily. In terms of processing, phosphorylated on some or all of the serine and threonine residues present in the C-terminal region.

The protein resides in the membrane. Visual pigments are the light-absorbing molecules that mediate vision. They consist of an apoprotein, opsin, covalently linked to cis-retinal. The polypeptide is Red-sensitive opsin (opn1lw1) (Xenopus laevis (African clawed frog)).